The chain runs to 332 residues: Peroxidase C1C (332 aa).

The first 9 residues, 1-9 (MLHASFSNA), serve as a signal peptide directing secretion. Q10 is subject to Pyrrolidone carboxylic acid. Intrachain disulfides connect C20-C100, C53-C58, C106-C310, and C186-C218. N22 carries N-linked (GlcNAc...) asparagine glycosylation. Residue H51 is the Proton acceptor of the active site. D52, V55, G57, D59, and S61 together coordinate Ca(2+). N66 carries an N-linked (GlcNAc...) asparagine glycan. P148 provides a ligand contact to substrate. H179 provides a ligand contact to heme b. T180 serves as a coordination point for Ca(2+). N-linked (GlcNAc...) asparagine glycans are attached at residues N195, N207, and N223. Residues D231, T234, and D239 each coordinate Ca(2+). N-linked (GlcNAc...) asparagine glycosylation occurs at N264.

It belongs to the peroxidase family. Classical plant (class III) peroxidase subfamily. Requires Ca(2+) as cofactor. Heme b is required as a cofactor.

The protein localises to the secreted. Its subcellular location is the vacuole. The catalysed reaction is 2 a phenolic donor + H2O2 = 2 a phenolic radical donor + 2 H2O. In terms of biological role, removal of H(2)O(2), oxidation of toxic reductants, biosynthesis and degradation of lignin, suberization, auxin catabolism, response to environmental stresses such as wounding, pathogen attack and oxidative stress. These functions might be dependent on each isozyme/isoform in each plant tissue. The polypeptide is Peroxidase C1C (PRXC1C) (Armoracia rusticana (Horseradish)).